We begin with the raw amino-acid sequence, 339 residues long: Tetraacyldisaccharide 4'-kinase (339 aa).

62 to 69 (VAGGTGKT) contributes to the ATP binding site.

Belongs to the LpxK family.

The catalysed reaction is a lipid A disaccharide + ATP = a lipid IVA + ADP + H(+). Its pathway is glycolipid biosynthesis; lipid IV(A) biosynthesis; lipid IV(A) from (3R)-3-hydroxytetradecanoyl-[acyl-carrier-protein] and UDP-N-acetyl-alpha-D-glucosamine: step 6/6. In terms of biological role, transfers the gamma-phosphate of ATP to the 4'-position of a tetraacyldisaccharide 1-phosphate intermediate (termed DS-1-P) to form tetraacyldisaccharide 1,4'-bis-phosphate (lipid IVA). In Xylella fastidiosa (strain M12), this protein is Tetraacyldisaccharide 4'-kinase.